Reading from the N-terminus, the 212-residue chain is Probable nicotinate-nucleotide adenylyltransferase (212 aa).

This sequence belongs to the NadD family.

It catalyses the reaction nicotinate beta-D-ribonucleotide + ATP + H(+) = deamido-NAD(+) + diphosphate. It functions in the pathway cofactor biosynthesis; NAD(+) biosynthesis; deamido-NAD(+) from nicotinate D-ribonucleotide: step 1/1. Catalyzes the reversible adenylation of nicotinate mononucleotide (NaMN) to nicotinic acid adenine dinucleotide (NaAD). This Shewanella sp. (strain MR-4) protein is Probable nicotinate-nucleotide adenylyltransferase.